Here is a 393-residue protein sequence, read N- to C-terminus: MLSAEHRAIVKATVPLLESGGEALTTHFYKTMLAEYPSVRPLFNQAHQQSGDQPRALANAVLMYARHIDQLEQLGGLVSQIVNKHVALNILPEHYPIVGACLLRAIREVLGAEIATDAVIEAWGAAYQQLADLLIGLEENVYVEKETATGGWRGTRAFVVARKVKESDEITSFYLRPADGGELLEFHPGQYIGLKLIVDGEEIRRNYSLSAAANGREYRISVKREPNGKASNYLHDSVNEGATLDLLTPSGDFTLEHNDKPLVLISGGVGITPTLAMLNAALQTSRPIHFIHATRHGGVHAFRDHIDELAARHPQLKRFYVYEKPRHDDEAHHAEGYIDEARLIEWLPATRDVDVYFLGPKSFMQAVKRHLKTIGVPEKQSRYEFFGPASALD.

The Globin domain occupies 1 to 139 (MLSAEHRAIV…LADLLIGLEE (139 aa)). His-85 is a binding site for heme b. Catalysis depends on charge relay system residues Tyr-95 and Glu-138. Positions 150–393 (GGWRGTRAFV…EFFGPASALD (244 aa)) are reductase. Positions 153–256 (RGTRAFVVAR…LTPSGDFTLE (104 aa)) constitute an FAD-binding FR-type domain. FAD is bound by residues Tyr-191 and 205–208 (RNYS). 268-273 (GVGITP) is an NADP(+) binding site. 385 to 388 (FFGP) lines the FAD pocket.

It belongs to the globin family. Two-domain flavohemoproteins subfamily. The protein in the C-terminal section; belongs to the flavoprotein pyridine nucleotide cytochrome reductase family. Requires heme b as cofactor. FAD serves as cofactor.

It carries out the reaction 2 nitric oxide + NADPH + 2 O2 = 2 nitrate + NADP(+) + H(+). It catalyses the reaction 2 nitric oxide + NADH + 2 O2 = 2 nitrate + NAD(+) + H(+). Functionally, is involved in NO detoxification in an aerobic process, termed nitric oxide dioxygenase (NOD) reaction that utilizes O(2) and NAD(P)H to convert NO to nitrate, which protects the bacterium from various noxious nitrogen compounds. Therefore, plays a central role in the inducible response to nitrosative stress. This chain is Flavohemoprotein, found in Burkholderia sp. (strain TH2).